Reading from the N-terminus, the 471-residue chain is Putative multidrug resistance protein MdtD (471 aa).

The Periplasmic portion of the chain corresponds to 1-11 (MTDLPDSTRWQ). Residues 12-32 (LWIVAFGFFMQSLDTTIVNTA) traverse the membrane as a helical segment. The Cytoplasmic portion of the chain corresponds to 33 to 48 (LPSMAQSLGESPLHMH). Residues 49-69 (MVIVSYVLTVAVMLPASGWLA) traverse the membrane as a helical segment. Residues 70 to 76 (DKVGVRN) lie on the Periplasmic side of the membrane. Residues 77-97 (IFFTAIVLFTLGSLFCALSGT) form a helical membrane-spanning segment. Topologically, residues 98–101 (LNEL) are cytoplasmic. Residues 102 to 124 (LLARALQGVGGAMMVPVGRLTVM) traverse the membrane as a helical segment. Residues 125–137 (KIVPREQYMAAMT) lie on the Periplasmic side of the membrane. Residues 138–158 (FVTLPGQVGPLLGPALGGLLV) traverse the membrane as a helical segment. Residues 159–164 (EYASWH) lie on the Cytoplasmic side of the membrane. The helical transmembrane segment at 165-185 (WIFLINIPVGIIGAIATLLLM) threads the bilayer. The Periplasmic segment spans residues 186-196 (PNYTMQTWRFD). The chain crosses the membrane as a helical span at residues 197–217 (LSGFLLLAVGMAVLTLALDGS). Residues 218–224 (KGTGLSP) lie on the Cytoplasmic side of the membrane. A helical transmembrane segment spans residues 225-245 (LAIAGLVAVGVVALVLYLLHA). Topologically, residues 246–262 (RNNNRALFSLKLFRTRT) are periplasmic. The helical transmembrane segment at 263 to 283 (FSLGLAGSFAGRIGSGMLPFM) threads the bilayer. Residues 284–285 (TP) are Cytoplasmic-facing. A helical membrane pass occupies residues 286–306 (VFLQIGLGFSPFHAGLMMIPM). Over 307–341 (VLGSMGMKRIVVQVVNRFGYRRVLVATTLGLSLVT) the chain is Periplasmic. The helical transmembrane segment at 342–362 (LLFMTTALLGWYYVLPFVLFL) threads the bilayer. At 363 to 395 (QGMVNSTRFSSMNTLTLKDLPDNLASSGNSLLS) the chain is on the cytoplasmic side. Residues 396 to 416 (MIMQLSMSIGVTIAGLLLGLF) form a helical membrane-spanning segment. Topologically, residues 417-430 (GSQHVSVDSGTTQT) are periplasmic. Residues 431-451 (VFMYTWLSMALIIALPAFIFA) traverse the membrane as a helical segment. The Cytoplasmic portion of the chain corresponds to 452-471 (RVPNDTHQNVAISRRKRSAQ).

Belongs to the major facilitator superfamily. TCR/Tet family.

Its subcellular location is the cell inner membrane. The sequence is that of Putative multidrug resistance protein MdtD from Shigella boydii serotype 4 (strain Sb227).